A 62-amino-acid chain; its full sequence is UPF0434 protein Rleg2_3773 (62 aa).

The protein belongs to the UPF0434 family.

This is UPF0434 protein Rleg2_3773 from Rhizobium leguminosarum bv. trifolii (strain WSM2304).